The primary structure comprises 217 residues: Large ribosomal subunit protein uL4 (217 aa).

It belongs to the universal ribosomal protein uL4 family. As to quaternary structure, part of the 50S ribosomal subunit.

One of the primary rRNA binding proteins, this protein initially binds near the 5'-end of the 23S rRNA. It is important during the early stages of 50S assembly. It makes multiple contacts with different domains of the 23S rRNA in the assembled 50S subunit and ribosome. Its function is as follows. Forms part of the polypeptide exit tunnel. This is Large ribosomal subunit protein uL4 from Koribacter versatilis (strain Ellin345).